The chain runs to 217 residues: Thiosulfate dehydrogenase electron acceptor (217 aa).

The signal sequence occupies residues 1–28 (MRQFIPMRRVLAVATLGALFWAAPASWA). Cytochrome c domains are found at residues 29 to 104 (AAPP…SKLK) and 116 to 206 (AAAA…AAQP). 6 residues coordinate heme c: C37, C40, H41, C137, C140, and H141.

Binds 2 heme c groups covalently per subunit.

Functionally, acts as an electron acceptor for the thiosulfate dehydrogenase TsdA. The sequence is that of Thiosulfate dehydrogenase electron acceptor (tsdB) from Thiomonas intermedia (strain K12) (Thiobacillus intermedius).